We begin with the raw amino-acid sequence, 206 residues long: GTP-binding protein YPTC5 (206 aa).

Residue 15 to 22 coordinates GTP; sequence GDSGVGKT. Positions 37-45 match the Effector region motif; that stretch reads YKATIGADF. GTP-binding positions include 63–67 and 125–128; these read DTAGQ and NKID. 2 S-geranylgeranyl cysteine lipidation sites follow: cysteine 205 and cysteine 206.

The protein belongs to the small GTPase superfamily. Rab family.

Its subcellular location is the cell membrane. Protein transport. Probably involved in vesicular traffic. The protein is GTP-binding protein YPTC5 (YPTC5) of Chlamydomonas reinhardtii (Chlamydomonas smithii).